The sequence spans 434 residues: Putative MgpC-like protein MPN_149 (434 aa).

2 disordered regions span residues 168–193 (GSGQ…PKAV) and 215–267 (EPLD…DNNG). Residues 170 to 184 (GQESSWNSQRSQKVL) show a composition bias toward polar residues. The span at 218-229 (DSTKDGKGKDES) shows a compositional bias: basic and acidic residues. The span at 248-267 (STGSQMAAVTDSQQSGDNNG) shows a compositional bias: polar residues.

It belongs to the MgpC family.

The chain is Putative MgpC-like protein MPN_149 from Mycoplasma pneumoniae (strain ATCC 29342 / M129 / Subtype 1) (Mycoplasmoides pneumoniae).